A 360-amino-acid polypeptide reads, in one-letter code: DNA replication and repair protein RecF (360 aa).

An ATP-binding site is contributed by 30-37; sequence GENGAGKT.

Belongs to the RecF family.

The protein resides in the cytoplasm. The RecF protein is involved in DNA metabolism; it is required for DNA replication and normal SOS inducibility. RecF binds preferentially to single-stranded, linear DNA. It also seems to bind ATP. This Deinococcus deserti (strain DSM 17065 / CIP 109153 / LMG 22923 / VCD115) protein is DNA replication and repair protein RecF.